The sequence spans 955 residues: Glycine dehydrogenase (decarboxylating) (955 aa).

An N6-(pyridoxal phosphate)lysine modification is found at Lys-702.

It belongs to the GcvP family. As to quaternary structure, the glycine cleavage system is composed of four proteins: P, T, L and H. It depends on pyridoxal 5'-phosphate as a cofactor.

The catalysed reaction is N(6)-[(R)-lipoyl]-L-lysyl-[glycine-cleavage complex H protein] + glycine + H(+) = N(6)-[(R)-S(8)-aminomethyldihydrolipoyl]-L-lysyl-[glycine-cleavage complex H protein] + CO2. Functionally, the glycine cleavage system catalyzes the degradation of glycine. The P protein binds the alpha-amino group of glycine through its pyridoxal phosphate cofactor; CO(2) is released and the remaining methylamine moiety is then transferred to the lipoamide cofactor of the H protein. The protein is Glycine dehydrogenase (decarboxylating) of Bordetella avium (strain 197N).